The primary structure comprises 382 residues: uncharacterized protein (382 aa).

Helical transmembrane passes span 8-28 (VMLLLCGLLLLTLAIAVLNTL), 45-65 (MVSSSYFTGNLVGTLFTGYLI), 75-95 (YLASLIFAAGCVGLGVMVGFW), 102-122 (FIAGIGCAMIWVVVESALMCS), 131-151 (LLAAYMMVYYMGTFLGQLLVS), 157-177 (LLHVLPWVTGMILAGILPLLF), 204-224 (LGVNGCIISGIVLGSLYGLMP), 231-251 (GMANASIGFWMAVLVSAGILG), 270-290 (VQVFVVILGSIAMLTQAAMAP), 291-311 (ALFILGAAGFTLYPVAMAWAC), 325-345 (ALLLSYTVGSLLGPSFAAMLM), and 349-369 (SDNLLFIMIASVSFIYLLMLL).

Belongs to the major facilitator superfamily. YcaD (TC 2.A.1.26) family.

The protein resides in the cell inner membrane. This is an uncharacterized protein from Salmonella paratyphi B (strain ATCC BAA-1250 / SPB7).